The sequence spans 70 residues: Probable tautomerase RSp0893 (70 aa).

Pro2 (proton acceptor; via imino nitrogen) is an active-site residue.

It belongs to the 4-oxalocrotonate tautomerase family.

In Ralstonia nicotianae (strain ATCC BAA-1114 / GMI1000) (Ralstonia solanacearum), this protein is Probable tautomerase RSp0893.